The following is a 449-amino-acid chain: Trigger factor (449 aa).

Residues 162-247 (GDTVTIDYTG…IHEVKSKELP (86 aa)) form the PPIase FKBP-type domain. The span at 427 to 438 (AKKATKKSTAKK) shows a compositional bias: basic residues. The disordered stretch occupies residues 427–449 (AKKATKKSTAKKSTKEDEKKADK). Residues 439–449 (STKEDEKKADK) show a composition bias toward basic and acidic residues.

The protein belongs to the FKBP-type PPIase family. Tig subfamily.

The protein resides in the cytoplasm. The enzyme catalyses [protein]-peptidylproline (omega=180) = [protein]-peptidylproline (omega=0). Functionally, involved in protein export. Acts as a chaperone by maintaining the newly synthesized protein in an open conformation. Functions as a peptidyl-prolyl cis-trans isomerase. The chain is Trigger factor from Lactobacillus gasseri (strain ATCC 33323 / DSM 20243 / BCRC 14619 / CIP 102991 / JCM 1131 / KCTC 3163 / NCIMB 11718 / NCTC 13722 / AM63).